The primary structure comprises 234 residues: Large ribosomal subunit protein uL1 (234 aa).

Belongs to the universal ribosomal protein uL1 family. Part of the 50S ribosomal subunit.

Functionally, binds directly to 23S rRNA. The L1 stalk is quite mobile in the ribosome, and is involved in E site tRNA release. Its function is as follows. Protein L1 is also a translational repressor protein, it controls the translation of the L11 operon by binding to its mRNA. The polypeptide is Large ribosomal subunit protein uL1 (Baumannia cicadellinicola subsp. Homalodisca coagulata).